Consider the following 400-residue polypeptide: Glycerol-3-phosphate dehydrogenase [NAD(+)] 1, chloroplastic (400 aa).

The transit peptide at 1–32 (MRFRSFFFSSSIFSLSHSRSPSLSSSRFSSLS) directs the protein to the chloroplast. NAD(+)-binding positions include 61–66 (GSGNWG), Phe92, Phe149, Lys172, and Ala205. Residue Lys172 participates in substrate binding. Lys257 acts as the Proton acceptor in catalysis. Positions 321, 350, and 352 each coordinate NAD(+). Position 321–322 (321–322 (RN)) interacts with substrate.

This sequence belongs to the NAD-dependent glycerol-3-phosphate dehydrogenase family. Expressed in young seedlings, flowers and siliques. Expressed at low levels in roots.

It localises to the plastid. Its subcellular location is the chloroplast. It catalyses the reaction sn-glycerol 3-phosphate + NAD(+) = dihydroxyacetone phosphate + NADH + H(+). Its pathway is membrane lipid metabolism; glycerophospholipid metabolism. In terms of biological role, involved in glycerolipid metabolism. The sequence is that of Glycerol-3-phosphate dehydrogenase [NAD(+)] 1, chloroplastic (DHAPRD) from Arabidopsis thaliana (Mouse-ear cress).